A 534-amino-acid polypeptide reads, in one-letter code: CTP synthase (534 aa).

The interval M1 to L265 is amidoligase domain. CTP is bound at residue S12. Residue S12 coordinates UTP. G13–I18 contributes to the ATP binding site. L-glutamine is bound at residue Y53. D70 is a binding site for ATP. 2 residues coordinate Mg(2+): D70 and E140. Residues D147–E149, K186–Q191, and K222 each bind CTP. Residues K186 to Q191 and K222 each bind UTP. One can recognise a Glutamine amidotransferase type-1 domain in the interval K289 to E530. G352 is an L-glutamine binding site. C379 (nucleophile; for glutamine hydrolysis) is an active-site residue. L-glutamine-binding positions include L380–Q383, E403, and R460. Catalysis depends on residues H503 and E505.

This sequence belongs to the CTP synthase family. Homotetramer.

It catalyses the reaction UTP + L-glutamine + ATP + H2O = CTP + L-glutamate + ADP + phosphate + 2 H(+). It carries out the reaction L-glutamine + H2O = L-glutamate + NH4(+). The enzyme catalyses UTP + NH4(+) + ATP = CTP + ADP + phosphate + 2 H(+). It participates in pyrimidine metabolism; CTP biosynthesis via de novo pathway; CTP from UDP: step 2/2. Allosterically activated by GTP, when glutamine is the substrate; GTP has no effect on the reaction when ammonia is the substrate. The allosteric effector GTP functions by stabilizing the protein conformation that binds the tetrahedral intermediate(s) formed during glutamine hydrolysis. Inhibited by the product CTP, via allosteric rather than competitive inhibition. Its function is as follows. Catalyzes the ATP-dependent amination of UTP to CTP with either L-glutamine or ammonia as the source of nitrogen. Regulates intracellular CTP levels through interactions with the four ribonucleotide triphosphates. The sequence is that of CTP synthase from Methanosarcina mazei (strain ATCC BAA-159 / DSM 3647 / Goe1 / Go1 / JCM 11833 / OCM 88) (Methanosarcina frisia).